The sequence spans 552 residues: Urocanate hydratase (552 aa).

Residues 49–50, Gln-127, 173–175, Asp-193, 239–240, 260–264, 270–271, and Tyr-319 contribute to the NAD(+) site; these read GG, GMG, NA, QTSAH, and YI. Cys-407 is a catalytic residue. Gly-489 contacts NAD(+).

This sequence belongs to the urocanase family. NAD(+) serves as cofactor.

The protein resides in the cytoplasm. The enzyme catalyses 4-imidazolone-5-propanoate = trans-urocanate + H2O. The protein operates within amino-acid degradation; L-histidine degradation into L-glutamate; N-formimidoyl-L-glutamate from L-histidine: step 2/3. Its function is as follows. Catalyzes the conversion of urocanate to 4-imidazolone-5-propionate. This is Urocanate hydratase from Bacillus cereus (strain B4264).